The following is a 69-amino-acid chain: DNA gyrase inhibitor YacG (69 aa).

Zn(2+)-binding residues include C14, C17, C33, and C37. The tract at residues 46–69 (ADEEKSIPGAPDMSDSDGWSEDQY) is disordered. A compositionally biased stretch (acidic residues) spans 59 to 69 (SDSDGWSEDQY).

This sequence belongs to the DNA gyrase inhibitor YacG family. Interacts with GyrB. Zn(2+) is required as a cofactor.

Its function is as follows. Inhibits all the catalytic activities of DNA gyrase by preventing its interaction with DNA. Acts by binding directly to the C-terminal domain of GyrB, which probably disrupts DNA binding by the gyrase. In Aliivibrio fischeri (strain MJ11) (Vibrio fischeri), this protein is DNA gyrase inhibitor YacG.